The chain runs to 188 residues: dTTP/UTP pyrophosphatase (188 aa).

Asp70 serves as the catalytic Proton acceptor.

Belongs to the Maf family. YhdE subfamily. Requires a divalent metal cation as cofactor.

It is found in the cytoplasm. The enzyme catalyses dTTP + H2O = dTMP + diphosphate + H(+). It catalyses the reaction UTP + H2O = UMP + diphosphate + H(+). Functionally, nucleoside triphosphate pyrophosphatase that hydrolyzes dTTP and UTP. May have a dual role in cell division arrest and in preventing the incorporation of modified nucleotides into cellular nucleic acids. This is dTTP/UTP pyrophosphatase from Clostridium botulinum (strain Alaska E43 / Type E3).